A 359-amino-acid polypeptide reads, in one-letter code: tRNA N6-adenosine threonylcarbamoyltransferase (359 aa).

Residues His-121 and His-125 each coordinate Fe cation. Substrate contacts are provided by residues 143 to 147, Asp-176, Gly-189, and Asn-286; that span reads LVSGG. A Fe cation-binding site is contributed by Asp-311.

The protein belongs to the KAE1 / TsaD family. The cofactor is Fe(2+).

The protein resides in the cytoplasm. The enzyme catalyses L-threonylcarbamoyladenylate + adenosine(37) in tRNA = N(6)-L-threonylcarbamoyladenosine(37) in tRNA + AMP + H(+). Required for the formation of a threonylcarbamoyl group on adenosine at position 37 (t(6)A37) in tRNAs that read codons beginning with adenine. Is involved in the transfer of the threonylcarbamoyl moiety of threonylcarbamoyl-AMP (TC-AMP) to the N6 group of A37, together with TsaE and TsaB. TsaD likely plays a direct catalytic role in this reaction. The polypeptide is tRNA N6-adenosine threonylcarbamoyltransferase (Jannaschia sp. (strain CCS1)).